The sequence spans 30 residues: V-type proton ATPase catalytic subunit A isoform 1 (30 aa).

It belongs to the ATPase alpha/beta chains family. As to quaternary structure, V-ATPase is a heteromultimeric enzyme composed of a peripheral catalytic V1 complex (main components: subunits A, B, C, D, E, and F) attached to an integral membrane V0 proton pore complex (main component: the proteolipid protein).

It carries out the reaction ATP + H2O + 4 H(+)(in) = ADP + phosphate + 5 H(+)(out). In terms of biological role, catalytic subunit of the peripheral V1 complex of vacuolar ATPase. V-ATPase vacuolar ATPase is responsible for acidifying a variety of intracellular compartments in eukaryotic cells. The polypeptide is V-type proton ATPase catalytic subunit A isoform 1 (Equisetum arvense (Field horsetail)).